The chain runs to 747 residues: Protein FAM83C (747 aa).

The segment at 1-309 (MFGGPGPGVL…LYAESQPVEG (309 aa)) is DUF1669. 7 disordered regions span residues 322–352 (LRPPPVALAFRPDVPSPTSSLPSSTSLSSIK), 374–412 (TGVVSSSLGPARREASGQPSLHRQLSDPNHGSPPGLYRA), 462–484 (LSRFPENGLPGSQEPSPLRGRWV), 517–550 (AREVGDPDSGVTPNSGPLRPGEQAPEDRRLSPSQ), 588–633 (NQSR…LGHS), 646–672 (GEGPGPNGLPISSPARTAGAGSGDEKR), and 692–715 (ARQGTEPGGPKGGHLNGGNSDLVR). Low complexity predominate over residues 328 to 350 (ALAFRPDVPSPTSSLPSSTSLSS). Over residues 390 to 402 (GQPSLHRQLSDPN) the composition is skewed to polar residues. The span at 697–707 (EPGGPKGGHLN) shows a compositional bias: gly residues.

This sequence belongs to the FAM83 family. As to quaternary structure, may interact with RAF1. Post-translationally, phosphorylated in vitro by CSNK1A1.

Its subcellular location is the cytoplasm. In terms of biological role, may play a role in MAPK signaling. This is Protein FAM83C from Homo sapiens (Human).